Here is a 1634-residue protein sequence, read N- to C-terminus: Protein TIC 214 (1634 aa).

Transmembrane regions (helical) follow at residues 25 to 45, 53 to 73, 94 to 116, 133 to 153, and 172 to 192; these read FIIGQFIRFISIYYAPLYVAL, ILALPYLLIHLFWNTDKSFFA, HFILQLLNSCILPNSTLARLITI, FAWFIGQIFMLNSFELVLVWI, and IFVILFNCLFGSLLFILSIQC. Disordered stretches follow at residues 216 to 242 and 1365 to 1395; these read RERLQSEEERDVEKKKPDYKLPDSESE and QQKSETDSETDSQQKNIAETQKYLEEDSTKS. Residues 1386–1395 show a composition bias toward basic and acidic residues; it reads KYLEEDSTKS.

The protein belongs to the TIC214 family. In terms of assembly, part of the Tic complex.

It localises to the plastid. Its subcellular location is the chloroplast inner membrane. Its function is as follows. Involved in protein precursor import into chloroplasts. May be part of an intermediate translocation complex acting as a protein-conducting channel at the inner envelope. The sequence is that of Protein TIC 214 from Cuscuta exaltata (Tall dodder).